The chain runs to 418 residues: Secreted aspartic protease 5 (418 aa).

Positions 1–18 (MFLKNILSVLAFALLIDA) are cleaved as a signal peptide. Residues 19–76 (APVKRSPGFVTLDFNVKRSLVDPDDPTVEAKRSPLFLEFTPSEFPVDETGRDGDVDKR) constitute a propeptide, activation peptide. One can recognise a Peptidase A1 domain in the interval 90–404 (YTADITVGSD…NLDDKKISMA (315 aa)). Aspartate 108 is a catalytic residue. A pepstatin A-binding site is contributed by 108–110 (DTG). Cysteine 123 and cysteine 135 form a disulfide bridge. 161–162 (GD) is a pepstatin A binding site. Residue glutamate 268 coordinates Zn(2+). The active site involves aspartate 294. 294–298 (DSGTT) is a pepstatin A binding site. The cysteines at positions 332 and 370 are disulfide-linked.

It belongs to the peptidase A1 family.

The protein localises to the secreted. It carries out the reaction Preferential cleavage at the carboxyl of hydrophobic amino acids, but fails to cleave 15-Leu-|-Tyr-16, 16-Tyr-|-Leu-17 and 24-Phe-|-Phe-25 of insulin B chain. Activates trypsinogen, and degrades keratin.. With respect to regulation, inhibited by pepstatin A analogs. In terms of biological role, secreted aspartic peptidases (SAPs) are a group of ten acidic hydrolases considered as key virulence factors. These enzymes supply the fungus with nutrient amino acids as well as are able to degrade the selected host's proteins involved in the immune defense. Moreover, acts toward human hemoglobin though limited proteolysis to generate a variety of antimicrobial hemocidins, enabling to compete with the other microorganisms of the same physiological niche using the microbicidal peptides generated from the host protein. This is Secreted aspartic protease 5 from Candida albicans (strain SC5314 / ATCC MYA-2876) (Yeast).